The primary structure comprises 240 residues: Uridylate kinase (240 aa).

12-15 is a binding site for ATP; sequence KLSG. Residues 20 to 25 form an involved in allosteric activation by GTP region; it reads GEQGFG. Gly54 contributes to the UMP binding site. ATP-binding residues include Gly55 and Arg59. UMP is bound by residues Asp74 and 135-142; that span reads TGNPYFST. ATP-binding residues include Asn163, Tyr169, and Asp172.

This sequence belongs to the UMP kinase family. As to quaternary structure, homohexamer.

It localises to the cytoplasm. The catalysed reaction is UMP + ATP = UDP + ADP. Its pathway is pyrimidine metabolism; CTP biosynthesis via de novo pathway; UDP from UMP (UMPK route): step 1/1. With respect to regulation, allosterically activated by GTP. Inhibited by UTP. In terms of biological role, catalyzes the reversible phosphorylation of UMP to UDP. This chain is Uridylate kinase, found in Bacillus cereus (strain ATCC 14579 / DSM 31 / CCUG 7414 / JCM 2152 / NBRC 15305 / NCIMB 9373 / NCTC 2599 / NRRL B-3711).